Reading from the N-terminus, the 216-residue chain is MGMNKAELIDVLTQKLGSDRRQATAAVENVVDTIVRAVHKGDSVTITGFGVFEQRRRAARVARNPRTGETVKVKPTSVPAFRPGAQFKAVVSGAQRLPAEGPAVKRGVGASAAKKVAKKAPAKKATKAAKKAATKAPARKAATKAPAKKAATKAPAKKAVKATKSPAKKVTKAVKKTAVKASVRKAATKAPAKKAAAKRPATKAPAKKATARRGRK.

A propeptide (removed; alternate) is located at residue G2. M3 bears the N-acetylmethionine mark. The bacterial histone-like domain stretch occupies residues 3–92; the sequence is MNKAELIDVL…PGAQFKAVVS (90 aa). N6-acetyllysine occurs at positions 5, 74, 88, 105, 118, and 135. Residues 102 to 216 form a disordered region; sequence PAVKRGVGAS…KKATARRGRK (115 aa). The segment at 103–216 is degenerate repeats region; sequence AVKRGVGASA…KKATARRGRK (114 aa). The segment covering 104–114 has biased composition (low complexity); sequence VKRGVGASAAK. A compositionally biased stretch (basic residues) spans 115–216; it reads KVAKKAPAKK…KKATARRGRK (102 aa). The residue at position 140 (K140) is an N6,N6,N6-trimethyllysine. K148 and K169 each carry N6-acetyllysine.

The protein belongs to the bacterial histone-like protein family. Long actinobacterial subfamily. Oligomerizes. Interacts with topoisomerase 1 (topA). Interacts with Eis. Interacts with antigen 85 proteins (fbpA, fbpB, fbpC). In terms of processing, probably acetylated by Eis in vivo. In vitro acetylated by Eis (strain H37Rv and H37Ra) on many more residues than those identified in vivo. Deacetylated in vitro by NAD-dependent protein deacylase (Rv1151c). Trimethylated on Lys-140 by human SUV39H1; trimethylation inhibits mycobacterial growth. SUV39H1 probably also trimethylates another residue. Post-translationally, probably succinylated by Rv0802c and desuccinylated by NAD-dependent protein deacylase (Rv1151c).

Its subcellular location is the cytoplasm. The protein localises to the nucleoid. The protein resides in the secreted. It localises to the cell wall. The enzyme catalyses 4 Fe(2+) + O2 + 4 H(+) = 4 Fe(3+) + 2 H2O. Functionally, a nucleoid-associated protein (NAP) that probably plays a role in chromosome compactation. Binds DNA non-specifically, with greater affinity for supercoiled than linear DNA, binds well to nicked DNA, gapped and cruciform DNA. Has a preference for A:T rich DNA. Required for activation of the mtbB operon. Binds the mtbB promoter in the presence of iron, binding is seen with as little as 25 uM Fe(2+) and increases with increasing Fe(2+). RNase E and HupB jointly contribute to cellular adaptation to changing growth conditions and survival during antibiotic treatment and in the host. Plays a role in stress survival. Stimulates supercoiling relaxation by topoisomerase 1 (Top1, topA). In terms of biological role, binds Fe(3+) but not Fe(2+). Has ferroxidase activity, converts Fe(2+) into Fe(3+) and in the presence of H(2)O(2) prevents the generation of hydroxyl radicals (the Fenton reaction). Protects DNA from damage in the presence of FeSO(4) and H(2)O(2). May function in iron storage. Involved in iron uptake by bacteria (either Fe(3+) or extracellular carboxymycobactin); antibodies against HupB block uptake of both. Following uptake iron is mostly found in the iron siderophores carboxymycobactin (CMb, extracellular) or mycobactin (Mb, lipophilic). Facilitates transfer of iron from CMb to Mb when liposomes plus a cell wall lysate are incubated with CMb. Binds iron, ferri-CMb and ferri-Mb; has 10-fold higher affinity for ferri-Mb. Suggested to transfer iron from CBm to Mb at the cell membrane. Its function is as follows. Required for biofilm formation; trimethylation by recombinant human SUV39H1 (a histone methyltransferase) inhibits biofilm formation. Induces lymphoproliferation, particularly in health tuberculin reactors, and is immunogenic. Maybe involved in pathogenesis of inflammatory bowel disease (IBD) in patients with ulcerative colitis and Crohn disease (CD). Bound by anti-neutrophil cytoplasmic antibodies (pANCA), which are a hallmark of IBD. The binding is due to pANCA directed against H1-3 cross-reacting with DBH epitopes. In CD, target of a strong IgA response. May play a role in cell wall assembly. In vitro at low levels enhances formation of TMM and TDM by antigen 85 proteins (fbpA, fbpB, fbpC), at higher levels inhibits TMM and TDM formation. The chain is DNA-binding protein HupB from Mycobacterium tuberculosis (strain ATCC 25618 / H37Rv).